The primary structure comprises 500 residues: Probable cytosol aminopeptidase (500 aa).

Positions 265 and 270 each coordinate Mn(2+). Lysine 277 is an active-site residue. Positions 288, 347, and 349 each coordinate Mn(2+). Residue arginine 351 is part of the active site.

It belongs to the peptidase M17 family. The cofactor is Mn(2+).

Its subcellular location is the cytoplasm. The enzyme catalyses Release of an N-terminal amino acid, Xaa-|-Yaa-, in which Xaa is preferably Leu, but may be other amino acids including Pro although not Arg or Lys, and Yaa may be Pro. Amino acid amides and methyl esters are also readily hydrolyzed, but rates on arylamides are exceedingly low.. It carries out the reaction Release of an N-terminal amino acid, preferentially leucine, but not glutamic or aspartic acids.. Its function is as follows. Presumably involved in the processing and regular turnover of intracellular proteins. Catalyzes the removal of unsubstituted N-terminal amino acids from various peptides. The protein is Probable cytosol aminopeptidase of Rickettsia felis (strain ATCC VR-1525 / URRWXCal2) (Rickettsia azadi).